A 676-amino-acid chain; its full sequence is Methionine--tRNA ligase (676 aa).

A 'HIGH' region motif is present at residues 15-25; it reads PYANGPIHLGH. Zn(2+) is bound by residues Cys-146, Cys-149, Cys-159, and Cys-162. Positions 332-336 match the 'KMSKS' region motif; sequence KMSKS. Lys-335 serves as a coordination point for ATP. In terms of domain architecture, tRNA-binding spans 575–676; the sequence is DFAKIDLRIA…EGAQPGMRVK (102 aa).

This sequence belongs to the class-I aminoacyl-tRNA synthetase family. MetG type 1 subfamily. As to quaternary structure, homodimer. Requires Zn(2+) as cofactor.

The protein localises to the cytoplasm. The enzyme catalyses tRNA(Met) + L-methionine + ATP = L-methionyl-tRNA(Met) + AMP + diphosphate. Is required not only for elongation of protein synthesis but also for the initiation of all mRNA translation through initiator tRNA(fMet) aminoacylation. The sequence is that of Methionine--tRNA ligase from Shewanella sp. (strain ANA-3).